A 1661-amino-acid chain; its full sequence is Beta/gamma crystallin domain-containing protein 2 (1661 aa).

8 disordered regions span residues 72 to 135 (EEET…PPCV), 148 to 168 (PGPREPSPHPGVGLTSGSSRS), 242 to 268 (VPAGHSPPASHLPRPTAGGPRSTGLGS), 297 to 321 (PASAHLPKNQDAPAACPDRDQGRAP), 337 to 380 (STEL…THPG), 411 to 757 (EHVT…EEDE), 808 to 871 (LGPW…VSCS), and 883 to 903 (TKGPHSELGLELQGGSRPTSR). Basic and acidic residues predominate over residues 105–118 (PKEKRPEGRLKEAV). Residues 337 to 353 (STELPLQTSQGQASVPS) show a composition bias toward polar residues. Residues 431–442 (PSPGGLSAPSSP) show a composition bias toward low complexity. Polar residues-rich tracts occupy residues 507-519 (SSPTQKEVVQGSS), 628-644 (PKSTEVVQGPKGSSSIQ), and 685-697 (SEGSPISSLTQKE). Over residues 706–719 (PAPSSSVDRVSPSP) the composition is skewed to low complexity. Over residues 731–750 (EASTESQLVSDPTEGKTCTE) the composition is skewed to polar residues. Acidic residues predominate over residues 825 to 835 (EKEEEEEEEPE). Positions 841–851 (DDEKLQRRQEK) are enriched in basic and acidic residues. Beta/gamma crystallin 'Greek key' domains follow at residues 986-1023 (GKVIFFSESGCQGSGREVWGDIVDASGWAPVASIRVVR), 1024-1067 (GCWV…RRVV), 1073-1113 (PEIS…TVSA), 1114-1156 (GLWL…KPMR), 1168-1213 (PRAV…RVLG), 1214-1256 (GCWV…RVIR), 1262-1302 (PAVV…HVLS), 1303-1345 (GVWV…QPVL), 1356-1393 (SKIQLFSRPDFLGDHFSFEDDQAALPASFRPQSCRVHG), 1394-1437 (GSWI…QKVS), 1443-1483 (PSIF…RIKG), and 1484-1525 (GIWV…YPIK). One can recognise a Ricin B-type lectin domain in the interval 1569 to 1659 (WYYEDGLLKN…DRASQIWTIH (91 aa)).

This sequence belongs to the beta/gamma-crystallin family.

This Homo sapiens (Human) protein is Beta/gamma crystallin domain-containing protein 2.